The primary structure comprises 81 residues: Putative CNGA1-overlapping antisense gene protein (81 aa).

As to expression, expressed in brain, notably in regions involved in long-term potentiation and long-term depression, such as hippocampal CA1 and CA3, dentate gyrus and cerebellar Purkinje layer.

This Homo sapiens (Human) protein is Putative CNGA1-overlapping antisense gene protein.